We begin with the raw amino-acid sequence, 1406 residues long: Sterol 3-beta-glucosyltransferase (1406 aa).

Positions 83 to 231 (ARFDESSDSD…IHSSHESSTS (149 aa)) are disordered. Residues 110-128 (GSSNPVNSQTEQRSGSQTS) are compositionally biased toward polar residues. The segment covering 209–231 (SAGRSQNSSQESSIHSSHESSTS) has biased composition (low complexity). Residues 236-286 (RLMEMFDFNKPEKVLVEYACSLLQSMLLQGYMYVTEGHICFYAYLPRKSTV) form the GRAM 1 domain. In terms of domain architecture, PH spans 286-385 (VAIKSGYLHK…WVKALQKVIF (100 aa)). Disordered regions lie at residues 457-558 (ASGH…AESA) and 576-622 (LDKR…DGKP). Positions 468 to 478 (HADRSPRSDRT) are enriched in basic and acidic residues. Composition is skewed to polar residues over residues 490-499 (GTSQPGNGSA) and 531-548 (SESI…SAVW). A compositionally biased stretch (basic and acidic residues) spans 576–587 (LDKRACSDERSG). The GRAM 2 domain occupies 730-796 (DRFRAHFALP…KDVENVEKEK (67 aa)). The UDP-alpha-D-glucose site is built by Ser-917, Arg-918, Asp-920, Ala-1220, His-1222, His-1235, Gly-1239, Thr-1240, Asp-1259, and Gln-1260. A disordered region spans residues 1334 to 1406 (QRSIASSTPF…LTNSIHGAGR (73 aa)). Low complexity predominate over residues 1336–1349 (SIASSTPFSPTPSA). Over residues 1355-1375 (QGDDDVEDSEEWTFVGDDNEM) the composition is skewed to acidic residues. The segment covering 1376 to 1387 (DMSRRMRDRAIS) has biased composition (basic and acidic residues). Polar residues predominate over residues 1397-1406 (LTNSIHGAGR).

The protein belongs to the glycosyltransferase 28 family.

It localises to the cytoplasm. The protein localises to the preautophagosomal structure membrane. The catalysed reaction is a sterol + UDP-alpha-D-glucose = a sterol 3-beta-D-glucoside + UDP + H(+). The enzyme catalyses ergosterol + UDP-alpha-D-glucose = ergosteryl 3-beta-D-glucoside + UDP + H(+). Its function is as follows. Sterol glycosyltransferase responsible for the glycosylation of ergosterol to form ergosterol-glucoside. The protein is Sterol 3-beta-glucosyltransferase of Aspergillus clavatus (strain ATCC 1007 / CBS 513.65 / DSM 816 / NCTC 3887 / NRRL 1 / QM 1276 / 107).